A 779-amino-acid polypeptide reads, in one-letter code: Probable ATP-dependent RNA helicase DHX40 (779 aa).

Positions 1–53 (MSRFPAVAGRAPRRQEEGERSRDLQEERPSAVCIADREEKGCTSQEGGTTPTF) are disordered. A compositionally biased stretch (basic and acidic residues) spans 13–41 (RRQEEGERSRDLQEERPSAVCIADREEKG). Residues 42–53 (CTSQEGGTTPTF) are compositionally biased toward polar residues. The 169-residue stretch at 63-231 (IQAVRDNSFL…FGNCPIFDIP (169 aa)) folds into the Helicase ATP-binding domain. Residue 76–83 (GNTGSGKT) coordinates ATP. The short motif at 173 to 176 (DEAH) is the DEAH box element. A Helicase C-terminal domain is found at 263–442 (TMDIHLNEMA…SVVLTLKCLA (180 aa)). Residues 737-779 (SKDVLKKMQRRNDDKSISDARARFLERKQQRTQDHSDTRKETG) form a disordered region.

The protein belongs to the DEAD box helicase family. DEAH subfamily.

The enzyme catalyses ATP + H2O = ADP + phosphate + H(+). Probable ATP-dependent RNA helicase. This chain is Probable ATP-dependent RNA helicase DHX40 (DHX40), found in Pongo abelii (Sumatran orangutan).